The following is a 712-amino-acid chain: Elongation factor G (712 aa).

The tr-type G domain maps to 8–290 (TRYRNIGISA…AVIEFLPSPT (283 aa)). GTP is bound by residues 17-24 (AHIDAGKT), 88-92 (DTPGH), and 142-145 (NKMD).

Belongs to the TRAFAC class translation factor GTPase superfamily. Classic translation factor GTPase family. EF-G/EF-2 subfamily.

It is found in the cytoplasm. In terms of biological role, catalyzes the GTP-dependent ribosomal translocation step during translation elongation. During this step, the ribosome changes from the pre-translocational (PRE) to the post-translocational (POST) state as the newly formed A-site-bound peptidyl-tRNA and P-site-bound deacylated tRNA move to the P and E sites, respectively. Catalyzes the coordinated movement of the two tRNA molecules, the mRNA and conformational changes in the ribosome. The polypeptide is Elongation factor G (Acinetobacter baumannii (strain AB0057)).